The sequence spans 324 residues: Short chain dehydrogenase/reductase dmxR8 (324 aa).

Residues L33, K58, D83, and N110 each coordinate NADP(+). Catalysis depends on S163, which acts as the Proton donor. NADP(+) is bound by residues Y200 and K204. Catalysis depends on Y200, which acts as the Proton acceptor. K204 functions as the Lowers pKa of active site Tyr in the catalytic mechanism.

Belongs to the short-chain dehydrogenases/reductases (SDR) family.

It functions in the pathway secondary metabolite biosynthesis. In terms of biological role, short chain dehydrogenase; part of the gene cluster that mediates the biosynthesis of the dimeric xanthones cryptosporioptides. The pathway begins with the synthesis of atrochrysone thioester by the polyketide synthase dmx-nrPKS. The atrochrysone carboxyl ACP thioesterase dmxR1 then breaks the thioester bond and releases the atrochrysone carboxylic acid from dmx-nrPKS. Atrochrysone carboxylic acid is decarboxylated by the decarboxylase dmxR15, and oxidized by the anthrone oxygenase dmxR16 to yield emodin. Emodin is then reduced to emodin hydroquinone by the oxidoreductase dmxR7. A-ring reduction by the short chain dehydrogenase dmxR18, dehydration by the scytalone dehydratase-like protein dmxR17 and probable spontaneous re-oxidation, results in overall deoxygenation to chrysophanol. Baeyer-Villiger oxidation by the Baeyer-Villiger monooxygenase (BVMO) dmxR6 then yields monodictylactone in equilibrium with monodictyphenone. In the case of the cryptosporioptides biosynthesis, monodictylactone is reduced at C-12 to an alcohol (by the short chain dehydrogenases dmxR12 or dmxR8) and hydroxylated at C-5 by dmxR9, yielding the electron-rich aromatic which could eliminate H(2)O to form the ortho-quinonemethide, followed by tautomerisation to paraquinone and complete the formal reduction to produce the 10-methylgroup. Conjugate addition of C-4a-OH to the resulting paraquinone by the monooxygenase dmxR10 then gives cyclohexadienone, which is then reduced at C-5 by the short chain dehydrogenase dmxR3 to give the dihydroxanthone. The 6,7-epoxide in the cryptosporioptides could be introduced by the cytochrome P450 monooxygenase dmxL3. The highly reducing PKS dmxL2 manufactures butyrate, which is further carboxylated by dmxL1 to form ethylmalonate. It is not yet clear whether the carboxylation occurs while the butyrate is attached to the ACP of dmxL2, but this unusual fungal metabolite could then be esterified to O-5 by the O-acetyltransferase dmxR13. Finally, dimerization performed by dmxR5 gives the observed dimers cryptosporioptides A, B and C as the final products of the pathway. The polypeptide is Short chain dehydrogenase/reductase dmxR8 (Cryptosporiopsis sp. (strain 8999)).